Reading from the N-terminus, the 297-residue chain is uncharacterized protein (297 aa).

The HTH lysR-type domain occupies 1-60; sequence MNIELRHLRYFVAVAEELHFGRAAARLNISQPPLSQQIQALEQQIGARLLARTNRSVLLT. The H-T-H motif DNA-binding region spans 20–40; the sequence is FGRAAARLNISQPPLSQQIQA.

This sequence belongs to the LysR transcriptional regulatory family.

This is an uncharacterized protein from Escherichia coli (strain K12).